The sequence spans 133 residues: Small ribosomal subunit protein eS17 (133 aa).

The protein belongs to the eukaryotic ribosomal protein eS17 family.

This Spodoptera frugiperda (Fall armyworm) protein is Small ribosomal subunit protein eS17 (RpS17).